The chain runs to 69 residues: DNA gyrase inhibitor YacG (69 aa).

Positions 7, 10, 26, and 30 each coordinate Zn(2+).

This sequence belongs to the DNA gyrase inhibitor YacG family. As to quaternary structure, interacts with GyrB. Zn(2+) serves as cofactor.

Its function is as follows. Inhibits all the catalytic activities of DNA gyrase by preventing its interaction with DNA. Acts by binding directly to the C-terminal domain of GyrB, which probably disrupts DNA binding by the gyrase. The polypeptide is DNA gyrase inhibitor YacG (Shewanella sp. (strain W3-18-1)).